The primary structure comprises 1367 residues: Phospholipid-transporting ATPase C4F10.16c (1367 aa).

At 1-154 (MPSLINFDAI…PKNLWNQFKN (154 aa)) the chain is on the cytoplasmic side. Residues 34–104 (HNGSLAHEGP…KKNEAGTESG (71 aa)) form a disordered region. A compositionally biased stretch (basic and acidic residues) spans 50–70 (SSRHHESQFSQEAHAEQRSRD). Residues 77 to 92 (FEGSCNNSDQSWTSRV) are compositionally biased toward polar residues. Residues 155 to 172 (IANAFFLFVTLLQCIPLF) form a helical membrane-spanning segment. Topologically, residues 173–177 (CPEHL) are lumenal. The helical transmembrane segment at 178 to 197 (GLSFIPLSVILLTTAIKDGI) threads the bilayer. The Cytoplasmic segment spans residues 198-482 (EDYRRCVLDK…PSKRSRITRD (285 aa)). Residues 483–503 (LNWTIILNFLLLFAMCLFSGV) form a helical membrane-spanning segment. Residues 504 to 531 (LRSIYSAQNNSARVFELSKNSNTAPAHG) are Lumenal-facing. The helical transmembrane segment at 532–552 (IISIFTSLILFQNLVPISLYI) threads the bilayer. The Cytoplasmic segment spans residues 553–1091 (TMDIVRSIQS…GRWDYKRMSQ (539 aa)). The 4-aspartylphosphate intermediate role is filled by aspartate 600. Positions 600, 601, 602, 724, 765, 767, 770, 788, 822, 823, 902, 903, 904, 1009, and 1015 each coordinate ATP. Aspartate 600 provides a ligand contact to Mg(2+). Residue threonine 602 coordinates Mg(2+). Aspartate 1035 lines the Mg(2+) pocket. The ATP site is built by asparagine 1038 and aspartate 1039. Residue aspartate 1039 coordinates Mg(2+). Residues 1092–1112 (MISFFFYKNVIWTFILFWYQF) form a helical membrane-spanning segment. The Lumenal portion of the chain corresponds to 1113 to 1124 (YNEFDGNYIFDY). A helical transmembrane segment spans residues 1125–1145 (TYVMLFNLLFTSLPVIIAGCF). Over 1146 to 1174 (DQDVDASVSMKNPSLYQRGILGLEWNGKR) the chain is Cytoplasmic. Residues 1175 to 1197 (FWSYMLDGIYQSLVCFGVALFVF) form a helical membrane-spanning segment. The Lumenal portion of the chain corresponds to 1198–1212 (KFGDFVSWTGRNIEC). A helical transmembrane segment spans residues 1213–1233 (IEDIGLFISSPTIFVINIFIL). Over 1234–1240 (MNQERLN) the chain is Cytoplasmic. The helical transmembrane segment at 1241-1261 (LISLITWMFSIGVFWIWTFIY) threads the bilayer. At 1262-1276 (SEVGPSYAFHKSASR) the chain is on the lumenal side. Residues 1277-1297 (TCQTFGFWCVTVLTIALCLLP) form a helical membrane-spanning segment. Arginine 1298 serves as a coordination point for a 1,2-diacyl-sn-glycero-3-phospho-L-serine. Residues 1298-1367 (RFSYICLQKL…TSVSFDDSNK (70 aa)) are Cytoplasmic-facing.

Belongs to the cation transport ATPase (P-type) (TC 3.A.3) family. Type IV subfamily. Mg(2+) serves as cofactor.

The protein localises to the cell membrane. The protein resides in the endoplasmic reticulum membrane. The catalysed reaction is ATP + H2O + phospholipidSide 1 = ADP + phosphate + phospholipidSide 2.. It carries out the reaction a 1,2-diacyl-sn-glycero-3-phosphoethanolamine(out) + ATP + H2O = a 1,2-diacyl-sn-glycero-3-phosphoethanolamine(in) + ADP + phosphate + H(+). It catalyses the reaction a 1,2-diacyl-sn-glycero-3-phosphocholine(out) + ATP + H2O = a 1,2-diacyl-sn-glycero-3-phosphocholine(in) + ADP + phosphate + H(+). The enzyme catalyses a beta-D-glucosyl-(1&lt;-&gt;1')-N-acylsphing-4-enine(out) + ATP + H2O = a beta-D-glucosyl-(1&lt;-&gt;1')-N-acylsphing-4-enine(in) + ADP + phosphate + H(+). The catalysed reaction is a 1,2-diacyl-sn-glycero-3-phospho-L-serine(out) + ATP + H2O = a 1,2-diacyl-sn-glycero-3-phospho-L-serine(in) + ADP + phosphate + H(+). Catalytic component of a P4-ATPase flippase complex which catalyzes the hydrolysis of ATP coupled to the transport of glucosylceramide, phosphatidylcholine, phosphatidylethanolamine, and small amounts of phosphatidylserine from the lumenal to the cytosolic leaflet of the cell membrane and ensures the maintenance of asymmetric distribution of phospholipids. The protein is Phospholipid-transporting ATPase C4F10.16c of Schizosaccharomyces pombe (strain 972 / ATCC 24843) (Fission yeast).